The following is a 420-amino-acid chain: UDP-N-acetyl-D-mannosamine dehydrogenase (420 aa).

5 residues coordinate NAD(+): Tyr-13, Ile-14, Asp-33, Thr-85, and Thr-126. The UDP-N-acetyl-alpha-D-mannosaminouronate site is built by Arg-160, Val-161, Lys-212, Asn-216, Arg-219, His-250, Arg-252, and Gly-263. Lys-212 (proton donor/acceptor) is an active-site residue. Cys-266 functions as the Nucleophile in the catalytic mechanism. 2 residues coordinate UDP-N-acetyl-alpha-D-mannosaminouronate: Phe-330 and Lys-331. Arg-338 provides a ligand contact to NAD(+). Position 416 (Lys-416) interacts with UDP-N-acetyl-alpha-D-mannosaminouronate.

It belongs to the UDP-glucose/GDP-mannose dehydrogenase family. WecC subfamily. Homodimer.

It carries out the reaction UDP-N-acetyl-alpha-D-mannosamine + 2 NAD(+) + H2O = UDP-N-acetyl-alpha-D-mannosaminouronate + 2 NADH + 3 H(+). It participates in bacterial outer membrane biogenesis; enterobacterial common antigen biosynthesis. Functionally, catalyzes the four-electron oxidation of UDP-N-acetyl-D-mannosamine (UDP-ManNAc), reducing NAD(+) and releasing UDP-N-acetylmannosaminuronic acid (UDP-ManNAcA). The sequence is that of UDP-N-acetyl-D-mannosamine dehydrogenase from Salmonella typhimurium (strain LT2 / SGSC1412 / ATCC 700720).